The following is a 396-amino-acid chain: Cathepsin E (396 aa).

A signal peptide spans 1 to 19 (MKTLLLLLLVLLELGEAQG). Positions 20–53 (SLHRVPLRRHPSLKKKLRARSQLSEFWKSHNLDM) are cleaved as a propeptide — activation peptide. One can recognise a Peptidase A1 domain in the interval 78 to 396 (YFGTISIGSP…NRVGLAPAVP (319 aa)). An N-linked (GlcNAc...) asparagine glycan is attached at Asn-90. Asp-96 is an active-site residue. Disulfide bonds link Cys-109–Cys-114 and Cys-272–Cys-276. Asp-281 is an active-site residue. Cys-314 and Cys-351 are disulfide-bonded.

The protein belongs to the peptidase A1 family. In terms of assembly, homodimer; disulfide-linked. In terms of processing, glycosylated. The nature of the carbohydrate chain varies between cell types. In fibroblasts, the proenzyme contains a high mannose-type oligosaccharide, while the mature enzyme contains a complex-type oligosaccharide. In erythrocyte membranes, both the proenzyme and mature enzyme contain a complex-type oligosaccharide. Two forms are produced by autocatalytic cleavage, form I begins at Ile-54, form II begins at Thr-57. As to expression, expressed abundantly in the stomach, the Clara cells of the lung and activated B-lymphocytes, and at lower levels in lymph nodes, skin and spleen. Not expressed in resting B-lymphocytes.

The protein resides in the endosome. The enzyme catalyses Similar to cathepsin D, but slightly broader specificity.. In terms of biological role, may have a role in immune function. Probably involved in the processing of antigenic peptides during MHC class II-mediated antigen presentation. May play a role in activation-induced lymphocyte depletion in the thymus, and in neuronal degeneration and glial cell activation in the brain. This chain is Cathepsin E (CTSE), found in Homo sapiens (Human).